Reading from the N-terminus, the 564-residue chain is Keratin, type II cytoskeletal 6C (564 aa).

Residues 1–11 (MASTSTTIRSH) show a composition bias toward low complexity. The tract at residues 1–23 (MASTSTTIRSHSSSRRGFSANSA) is disordered. A2 is modified (N-acetylalanine). Positions 2–162 (ASTSTTIRSH…DPAIQRVRAE (161 aa)) are head. A Phosphoserine modification is found at S60. Residues 163–198 (EREQIKTLNNKFASFIDKVRFLEQQNKVLDTKWTLL) form a coil 1A region. In terms of domain architecture, IF rod spans 163 to 476 (EREQIKTLNN…KLLEGEECRL (314 aa)). Residues 199–217 (QEQGTKTVRQNLEPLFEQY) are linker 1. Residues 218–309 (INNLRRQLDS…ALYDAELSQM (92 aa)) form a coil 1B region. The interval 310–333 (QTHISDTSVVLSMDNNRNLDLDSI) is linker 12. Residues 334 to 472 (IAEVKAQYEE…ATYRKLLEGE (139 aa)) are coil 2. A tail region spans residues 473 to 564 (ECRLNGEGVG…SSSSRKSYKH (92 aa)).

The protein belongs to the intermediate filament family. In terms of assembly, heterodimer of a type I and a type II keratin. KRT6 isomers associate with KRT16 and/or KRT17. In terms of tissue distribution, constitutively expressed in distinct types of epithelia such as those in oral mucosa, esophagus, papillae of tongue and hair follicle outer root sheath.

The sequence is that of Keratin, type II cytoskeletal 6C (KRT6C) from Homo sapiens (Human).